The chain runs to 350 residues: TLC domain-containing protein fld-1 (350 aa).

Residues Thr9–Phe29 traverse the membrane as a helical segment. The interval Gly65–Pro100 is disordered. Acidic residues predominate over residues Pro75–Glu90. The TLC domain maps to Asn102–Leu279. Helical transmembrane passes span Cys111–Tyr131, Val145–Leu165, Ile173–Phe193, Arg195–Ser215, Pro229–Val249, and Ile270–Ala292.

In terms of tissue distribution, ubiquitously expressed.

It localises to the cell membrane. In terms of biological role, regulates the composition and fluidity of the plasma membrane. Inhibits the incorporation of membrane-fluidizing phospholipids containing omega-3 long-chain polyunsaturated fatty acids (LCPUFA) and thereby promotes membrane rigidity. Does not appear to have any effect on LCPUFA synthesis. This chain is TLC domain-containing protein fld-1, found in Caenorhabditis elegans.